Here is a 1138-residue protein sequence, read N- to C-terminus: Tyrosine-protein kinase receptor Tie-1 (1138 aa).

Positions 1 to 21 are cleaved as a signal peptide; that stretch reads MVWRVPPFLLPILFLASHVGA. The Extracellular segment spans residues 22–759; the sequence is AVDLTLLANL…SRAAEEGLDQ (738 aa). One can recognise an Ig-like C2-type 1 domain in the interval 43–105; the sequence is CVSGEAGAGR…PSDLVGVFSC (63 aa). 2 N-linked (GlcNAc...) asparagine glycosylation sites follow: asparagine 83 and asparagine 161. 3 consecutive EGF-like domains span residues 214 to 256, 258 to 303, and 305 to 345; these read GCGA…TRCE, ACRE…SQCQ, and ACAP…VHCE. Cystine bridges form between cysteine 228–cysteine 237, cysteine 231–cysteine 244, and cysteine 246–cysteine 255. 3 cysteine pairs are disulfide-bonded: cysteine 315–cysteine 327, cysteine 321–cysteine 333, and cysteine 335–cysteine 344. Residues 372-426 enclose the Ig-like C2-type 2 domain; that stretch reads CAAAGNPFPVRGSIELRKPDGTVLLSTKAIVEPEKTTAEFEVPRLVLADSGFWEC. 3 consecutive Fibronectin type-III domains span residues 446-545, 548-642, and 646-739; these read PPVP…CPEP, QPWL…LPPS, and APRH…TLGN. Residues asparagine 503, asparagine 596, and asparagine 709 are each glycosylated (N-linked (GlcNAc...) asparagine). A helical membrane pass occupies residues 760-784; sequence QLILAVVGSVSATCLTILAALLTLV. Residues 785–1138 are Cytoplasmic-facing; that stretch reads CIRRSCLHRR…AGIDATAEEA (354 aa). Residues 839-1118 enclose the Protein kinase domain; sequence ITFEDLIGEG…RMLEARKAYV (280 aa). ATP contacts are provided by residues 845 to 853 and lysine 870; that span reads IGEGNFGQV. Aspartate 979 acts as the Proton acceptor in catalysis. Position 1007 is a phosphotyrosine; by autocatalysis (tyrosine 1007).

The protein belongs to the protein kinase superfamily. Tyr protein kinase family. Tie subfamily. Heterodimer with TEK/TIE2. Interacts with SVEP1 (via C-terminus). In terms of processing, phosphorylated on tyrosine residues in response to ANGPT1, most likely by TEK/TIE2. Specifically expressed in developing vascular endothelial cells.

It localises to the cell membrane. The enzyme catalyses L-tyrosyl-[protein] + ATP = O-phospho-L-tyrosyl-[protein] + ADP + H(+). In terms of biological role, transmembrane tyrosine-protein kinase that may modulate TEK/TIE2 activity and contribute to the regulation of angiogenesis. This Homo sapiens (Human) protein is Tyrosine-protein kinase receptor Tie-1 (TIE1).